We begin with the raw amino-acid sequence, 563 residues long: Tripeptidyl-peptidase 1 (563 aa).

Residues 1–19 form the signal peptide; that stretch reads MRLRTCLLGLLALCVASKC. A propeptide spans 20 to 195 (removed in mature form); the sequence is SYSPEPDQQR…PEPQVSGTVG (176 aa). An intrachain disulfide couples C111 to C122. The Peptidase S53 domain occupies 199-563; it reads GVTPSVIRQR…PALLKALIKP (365 aa). N-linked (GlcNAc...) asparagine glycans are attached at residues N210 and N222. Catalysis depends on charge relay system residues E272 and D276. 3 N-linked (GlcNAc...) asparagine glycosylation sites follow: N286, N313, and N443. 2 disulfides stabilise this stretch: C365-C526 and C522-C537. Residue S475 is the Charge relay system of the active site. Positions 517 and 518 each coordinate Ca(2+). 3 residues coordinate Ca(2+): G539, G541, and D543.

As to quaternary structure, monomer. Interacts with CLN5. Interacts with CLN3. It depends on Ca(2+) as a cofactor. Activated by autocatalytic proteolytical processing upon acidification. N-glycosylation is required for processing and activity.

The protein resides in the lysosome. It is found in the melanosome. The enzyme catalyses Release of an N-terminal tripeptide from a polypeptide, but also has endopeptidase activity.. Its function is as follows. Lysosomal serine protease with tripeptidyl-peptidase I activity. May act as a non-specific lysosomal peptidase which generates tripeptides from the breakdown products produced by lysosomal proteinases. Requires substrates with an unsubstituted N-terminus. In Canis lupus familiaris (Dog), this protein is Tripeptidyl-peptidase 1 (TPP1).